Reading from the N-terminus, the 1058-residue chain is Carbamoyl phosphate synthase large chain (1058 aa).

Residues 1–401 (MPKRKDIQKI…SLLKACRSLE (401 aa)) are carboxyphosphate synthetic domain. ATP-binding residues include Arg-129, Arg-169, Gly-175, Gly-176, Arg-208, Ile-210, Glu-215, Gly-241, Ile-242, His-243, Gln-284, and Glu-298. Residues 133–327 (KQLMQELDQP…IAKLAAKIAV (195 aa)) enclose the ATP-grasp 1 domain. Gln-284, Glu-298, and Asn-300 together coordinate Mg(2+). Residues Gln-284, Glu-298, and Asn-300 each coordinate Mn(2+). Residues 402-546 (IGVCHNEMTS…YSTYELENES (145 aa)) are oligomerization domain. The interval 547-929 (VQSNKESILV…ALYKAFEANN (383 aa)) is carbamoyl phosphate synthetic domain. In terms of domain architecture, ATP-grasp 2 spans 671–861 (EKALKELGIP…MAQIATKLIL (191 aa)). Residues Arg-707, Ser-746, Ile-748, Glu-752, Gly-777, Val-778, His-779, Ser-780, Gln-820, and Glu-832 each contribute to the ATP site. The Mg(2+) site is built by Gln-820, Glu-832, and Asn-834. Positions 820, 832, and 834 each coordinate Mn(2+). Positions 930 to 1058 (SHLSEFGQIV…ESRCFNIEAI (129 aa)) constitute an MGS-like domain. The interval 930–1058 (SHLSEFGQIV…ESRCFNIEAI (129 aa)) is allosteric domain.

It belongs to the CarB family. As to quaternary structure, composed of two chains; the small (or glutamine) chain promotes the hydrolysis of glutamine to ammonia, which is used by the large (or ammonia) chain to synthesize carbamoyl phosphate. Tetramer of heterodimers (alpha,beta)4. The cofactor is Mg(2+). Mn(2+) is required as a cofactor.

The catalysed reaction is hydrogencarbonate + L-glutamine + 2 ATP + H2O = carbamoyl phosphate + L-glutamate + 2 ADP + phosphate + 2 H(+). The enzyme catalyses hydrogencarbonate + NH4(+) + 2 ATP = carbamoyl phosphate + 2 ADP + phosphate + 2 H(+). The protein operates within amino-acid biosynthesis; L-arginine biosynthesis; carbamoyl phosphate from bicarbonate: step 1/1. It functions in the pathway pyrimidine metabolism; UMP biosynthesis via de novo pathway; (S)-dihydroorotate from bicarbonate: step 1/3. Functionally, large subunit of the glutamine-dependent carbamoyl phosphate synthetase (CPSase). CPSase catalyzes the formation of carbamoyl phosphate from the ammonia moiety of glutamine, carbonate, and phosphate donated by ATP, constituting the first step of 2 biosynthetic pathways, one leading to arginine and/or urea and the other to pyrimidine nucleotides. The large subunit (synthetase) binds the substrates ammonia (free or transferred from glutamine from the small subunit), hydrogencarbonate and ATP and carries out an ATP-coupled ligase reaction, activating hydrogencarbonate by forming carboxy phosphate which reacts with ammonia to form carbamoyl phosphate. The polypeptide is Carbamoyl phosphate synthase large chain (Streptococcus pyogenes serotype M1).